Consider the following 465-residue polypeptide: 3-isopropylmalate dehydratase large subunit (465 aa).

[4Fe-4S] cluster is bound by residues cysteine 347, cysteine 407, and cysteine 410.

The protein belongs to the aconitase/IPM isomerase family. LeuC type 1 subfamily. As to quaternary structure, heterodimer of LeuC and LeuD. [4Fe-4S] cluster serves as cofactor.

The enzyme catalyses (2R,3S)-3-isopropylmalate = (2S)-2-isopropylmalate. The protein operates within amino-acid biosynthesis; L-leucine biosynthesis; L-leucine from 3-methyl-2-oxobutanoate: step 2/4. Its function is as follows. Catalyzes the isomerization between 2-isopropylmalate and 3-isopropylmalate, via the formation of 2-isopropylmaleate. In Tolumonas auensis (strain DSM 9187 / NBRC 110442 / TA 4), this protein is 3-isopropylmalate dehydratase large subunit.